We begin with the raw amino-acid sequence, 928 residues long: MKDSVDCPSILPTDRTSVLSETSTLVGSSSHVYSRHAPMNSYHNSMNSNIYHSPKASSPLVSYKTSSPVLLKRATAPVLPSFKPKEQRYNKPQGCSLITAVELGKIIETLPDEKVLLLDVRPFTEHAKSIITNSIHVCLPSTLLRRKNFTFSKLLDNLTPSEQSVLKSKLAIDNLRIIIYDSTANQTESSVSLPCYGIASKLIEFDTNVKKTVSILMCGFPQFKILFPDHINTNTFNSDCISSAEPKSPKTNLMNSLHNTAPHMTATTPLSSPQMNLKLKVPDDSRSDHSNFSSSPSPRNVLSDSPMSSSSPISALFKFQLPAPQTNINQMFKFSQNEEIMGLETYLSAVNIKEEHERWYNNDSAKKSLQNFQFPKNQNSLEKDTNKDKLGFQIRYENLSKNYEKEVIDSVIPEWFQHLMSIPKIELVSQFQKLDFLEKRRLNHSVSFRKKENSFILEKPSSYPEQLTSTSSSTIMPPKFPDVNKVQKRSHSQPIFTQYSKYKSMLSLESDSDSESDDVIISSGVELGAKNRYKDIFPYEHSRVILKKGLQSSKGIKHSHSTSDGGILDNYINANYLSLPRFSVEQNSSFQTTTTTTRRVRYIATQAPMPSTVHDFYTCILNNGVPLVLSLTNDFENGIEKCYRYWQEGNYNGIHVKLLEKKILKMPSTTSMRKNTMGTQNSSLYSAGVQGNSSNYSTDNDNDNDNNNNNNNNSNIAVTAAACDDDDDDDDDAILIRKILLTYHDQEKPYELLQIQVKNWPDLGTLLNPISILQAINVKNHIIDTLFARNYYQNDQLPTILVHCSAGCGRTGTLCTIDSILSNFEMFEMLQKEFVKLKYPAKLFDPISWTINIFRKQRISMVQNINQFIFIYDCLLFYFRLRLDDITERTDGDGSNKDNISLSALIEQIEKLEILQTFVDDKLKELPQ.

The residue at position 75 (Thr-75) is a Phosphothreonine. The Rhodanese domain occupies 111–232 (PDEKVLLLDV…FKILFPDHIN (122 aa)). The segment at 247–307 (KSPKTNLMNS…PRNVLSDSPM (61 aa)) is disordered. At Ser-248 the chain carries Phosphoserine. 2 stretches are compositionally biased toward polar residues: residues 249 to 259 (PKTNLMNSLHN) and 265 to 275 (TATTPLSSPQM). Positions 280–289 (KVPDDSRSDH) are enriched in basic and acidic residues. Residues 290–307 (SNFSSSPSPRNVLSDSPM) are compositionally biased toward low complexity. A phosphoserine mark is found at Ser-297 and Ser-368. 2 disordered regions span residues 467–487 (LTSTSSSTIMPPKFPDVNKVQ) and 672–713 (MRKN…NNNN). A Tyrosine-protein phosphatase domain is found at 502–878 (YKSMLSLESD…IFIYDCLLFY (377 aa)). Polar residues predominate over residues 672-691 (MRKNTMGTQNSSLYSAGVQG). Positions 692–713 (NSSNYSTDNDNDNDNNNNNNNN) are enriched in low complexity. Cys-804 serves as the catalytic Phosphocysteine intermediate.

It belongs to the protein-tyrosine phosphatase family. Non-receptor class subfamily. As to quaternary structure, interacts with HOG1.

Its subcellular location is the cytoplasm. The catalysed reaction is O-phospho-L-tyrosyl-[protein] + H2O = L-tyrosyl-[protein] + phosphate. Functionally, major phosphatase responsible for tyrosine dephosphorylation of MAP kinases FUS3 and HOG1 to inactivate their activity; it also has important roles, along with MSG5, in the inactivation of FUS3 following pheromone stimulation. This is Tyrosine-protein phosphatase 3 (PTP3) from Saccharomyces cerevisiae (strain ATCC 204508 / S288c) (Baker's yeast).